Reading from the N-terminus, the 176-residue chain is Large ribosomal subunit protein uL6 (176 aa).

Belongs to the universal ribosomal protein uL6 family. As to quaternary structure, part of the 50S ribosomal subunit.

Functionally, this protein binds to the 23S rRNA, and is important in its secondary structure. It is located near the subunit interface in the base of the L7/L12 stalk, and near the tRNA binding site of the peptidyltransferase center. The protein is Large ribosomal subunit protein uL6 of Lactobacillus helveticus (strain DPC 4571).